A 311-amino-acid polypeptide reads, in one-letter code: MEEKNLVKVQVPGTSANLGAGFDSMGIALNIYNYVSLRQLEPGSGVIIEVKGEGADFISRDKDNLVYQAIAGVYREIYGSDVLIPDLEITLENNIPLARGLGSSAAAIVGGAVAANEMFNGELTRDELLKHVLELEGHLDNIAPAMYGGLTCSLITRENELMFRTVDVVEDWNFIIIVPGQELSTQKAREALPERIAFQDGLFNLSRANMLILAFQQRDYELLWHSMDDELHEPYRAKLIPGLDRLLQEVRGAGIPAAISGAGPSIACVLSEIEEEKIVRELGKEKFSAHGIESNFFKLKPDNSGAKSILH.

Position 96-106 (96-106 (PLARGLGSSAA)) interacts with ATP.

It belongs to the GHMP kinase family. Homoserine kinase subfamily.

Its subcellular location is the cytoplasm. It catalyses the reaction L-homoserine + ATP = O-phospho-L-homoserine + ADP + H(+). The protein operates within amino-acid biosynthesis; L-threonine biosynthesis; L-threonine from L-aspartate: step 4/5. Catalyzes the ATP-dependent phosphorylation of L-homoserine to L-homoserine phosphate. This chain is Homoserine kinase, found in Natranaerobius thermophilus (strain ATCC BAA-1301 / DSM 18059 / JW/NM-WN-LF).